We begin with the raw amino-acid sequence, 219 residues long: Ras-related protein Rab-32A (219 aa).

Residue 22–29 coordinates GTP; it reads GDIGTGKT. The Effector region motif lies at 44 to 52; it reads YKSTIGVDF. GTP contacts are provided by residues 71–75 and 134–137; these read DIAGQ and NKCD. Residues 192–219 form a disordered region; it reads NQPIEGTIQPGDLNKQPQPTSTGPSCCK. A compositionally biased stretch (polar residues) spans 206-219; it reads KQPQPTSTGPSCCK. S-geranylgeranyl cysteine attachment occurs at residues C217 and C218.

It belongs to the small GTPase superfamily. Rab family.

The chain is Ras-related protein Rab-32A (rab32A) from Dictyostelium discoideum (Social amoeba).